We begin with the raw amino-acid sequence, 340 residues long: S-adenosylmethionine:tRNA ribosyltransferase-isomerase (340 aa).

This sequence belongs to the QueA family. As to quaternary structure, monomer.

It is found in the cytoplasm. The catalysed reaction is 7-aminomethyl-7-carbaguanosine(34) in tRNA + S-adenosyl-L-methionine = epoxyqueuosine(34) in tRNA + adenine + L-methionine + 2 H(+). The protein operates within tRNA modification; tRNA-queuosine biosynthesis. Functionally, transfers and isomerizes the ribose moiety from AdoMet to the 7-aminomethyl group of 7-deazaguanine (preQ1-tRNA) to give epoxyqueuosine (oQ-tRNA). In Chlorobaculum parvum (strain DSM 263 / NCIMB 8327) (Chlorobium vibrioforme subsp. thiosulfatophilum), this protein is S-adenosylmethionine:tRNA ribosyltransferase-isomerase.